The primary structure comprises 499 residues: Probable cytosol aminopeptidase (499 aa).

Mn(2+) is bound by residues Lys262 and Asp267. Lys274 is an active-site residue. Residues Asp285, Asp344, and Glu346 each contribute to the Mn(2+) site. The active site involves Arg348.

The protein belongs to the peptidase M17 family. The cofactor is Mn(2+).

The protein resides in the cytoplasm. The enzyme catalyses Release of an N-terminal amino acid, Xaa-|-Yaa-, in which Xaa is preferably Leu, but may be other amino acids including Pro although not Arg or Lys, and Yaa may be Pro. Amino acid amides and methyl esters are also readily hydrolyzed, but rates on arylamides are exceedingly low.. The catalysed reaction is Release of an N-terminal amino acid, preferentially leucine, but not glutamic or aspartic acids.. Presumably involved in the processing and regular turnover of intracellular proteins. Catalyzes the removal of unsubstituted N-terminal amino acids from various peptides. The protein is Probable cytosol aminopeptidase of Protochlamydia amoebophila (strain UWE25).